We begin with the raw amino-acid sequence, 1463 residues long: DNA polymerase III PolC-type (1463 aa).

The 157-residue stretch at 425–581 (YVVFDVETTG…YDAEATGRLL (157 aa)) folds into the Exonuclease domain.

This sequence belongs to the DNA polymerase type-C family. PolC subfamily.

It is found in the cytoplasm. It catalyses the reaction DNA(n) + a 2'-deoxyribonucleoside 5'-triphosphate = DNA(n+1) + diphosphate. Functionally, required for replicative DNA synthesis. This DNA polymerase also exhibits 3' to 5' exonuclease activity. This is DNA polymerase III PolC-type from Streptococcus pneumoniae serotype 4 (strain ATCC BAA-334 / TIGR4).